Consider the following 258-residue polypeptide: Shikimate dehydrogenase (NADP(+)) (258 aa).

Shikimate is bound by residues 14–16 (SES) and T61. The Proton acceptor role is filled by K65. The shikimate site is built by N86 and D101. NADP(+) is bound by residues 125-129 (GSGGS) and L211. Position 213 (Y213) interacts with shikimate. G234 is a binding site for NADP(+).

Belongs to the shikimate dehydrogenase family. As to quaternary structure, homodimer.

The catalysed reaction is shikimate + NADP(+) = 3-dehydroshikimate + NADPH + H(+). Its pathway is metabolic intermediate biosynthesis; chorismate biosynthesis; chorismate from D-erythrose 4-phosphate and phosphoenolpyruvate: step 4/7. In terms of biological role, involved in the biosynthesis of the chorismate, which leads to the biosynthesis of aromatic amino acids. Catalyzes the reversible NADPH linked reduction of 3-dehydroshikimate (DHSA) to yield shikimate (SA). The chain is Shikimate dehydrogenase (NADP(+)) from Clostridium botulinum (strain Loch Maree / Type A3).